A 1178-amino-acid polypeptide reads, in one-letter code: DNA-directed RNA polymerase subunit beta (1178 aa).

Positions 1–37 are disordered; it reads MLEGCILPDFGQSKTDVSPSQSRPQSSPNNSVPGAPN. The span at 17–33 shows a compositional bias: low complexity; that stretch reads VSPSQSRPQSSPNNSVP.

Belongs to the RNA polymerase beta chain family. The RNAP catalytic core consists of 2 alpha, 1 beta, 1 beta' and 1 omega subunit. When a sigma factor is associated with the core the holoenzyme is formed, which can initiate transcription.

The enzyme catalyses RNA(n) + a ribonucleoside 5'-triphosphate = RNA(n+1) + diphosphate. Functionally, DNA-dependent RNA polymerase catalyzes the transcription of DNA into RNA using the four ribonucleoside triphosphates as substrates. The sequence is that of DNA-directed RNA polymerase subunit beta from Mycobacterium leprae (strain Br4923).